We begin with the raw amino-acid sequence, 280 residues long: Ribosomal protein L11 methyltransferase (280 aa).

The S-adenosyl-L-methionine site is built by threonine 131, glycine 152, aspartate 174, and asparagine 217.

The protein belongs to the methyltransferase superfamily. PrmA family.

The protein localises to the cytoplasm. The catalysed reaction is L-lysyl-[protein] + 3 S-adenosyl-L-methionine = N(6),N(6),N(6)-trimethyl-L-lysyl-[protein] + 3 S-adenosyl-L-homocysteine + 3 H(+). Its function is as follows. Methylates ribosomal protein L11. The polypeptide is Ribosomal protein L11 methyltransferase (Bacteroides thetaiotaomicron (strain ATCC 29148 / DSM 2079 / JCM 5827 / CCUG 10774 / NCTC 10582 / VPI-5482 / E50)).